Reading from the N-terminus, the 240-residue chain is MKIDIIISADDIKKEKILHKSVIVVDMLRATSVIITAINNGCREVIPVLTIEEALEIYHKNREKYVMGGERKALKIEGFHCSNSPLEYSRQVVENKTLVITTSNGTKAIKGSIMAKNILIGALINADEVANRSINLNNDVVIVNAGTCGQFSIDDFICSGYMINCVIKKIKVDLTDIARTALYIYEQNPDIITFIKKASHYKRIKKLKLYDDLEYCCRKDIIKIVPEYIDGIIKCNKLIY.

The protein belongs to the ComB family. The cofactor is Mg(2+).

It catalyses the reaction (2R)-O-phospho-3-sulfolactate + H2O = (2R)-3-sulfolactate + phosphate. The protein is Probable 2-phosphosulfolactate phosphatase of Clostridium kluyveri (strain NBRC 12016).